A 329-amino-acid chain; its full sequence is Acetyl-coenzyme A carboxylase carboxyl transferase subunit alpha (329 aa).

The CoA carboxyltransferase C-terminal domain maps to 40–294; that stretch reads QLETLAARRR…KNALEKHLSE (255 aa).

It belongs to the AccA family. In terms of assembly, acetyl-CoA carboxylase is a heterohexamer composed of biotin carboxyl carrier protein (AccB), biotin carboxylase (AccC) and two subunits each of ACCase subunit alpha (AccA) and ACCase subunit beta (AccD).

It is found in the cytoplasm. It carries out the reaction N(6)-carboxybiotinyl-L-lysyl-[protein] + acetyl-CoA = N(6)-biotinyl-L-lysyl-[protein] + malonyl-CoA. It participates in lipid metabolism; malonyl-CoA biosynthesis; malonyl-CoA from acetyl-CoA: step 1/1. In terms of biological role, component of the acetyl coenzyme A carboxylase (ACC) complex. First, biotin carboxylase catalyzes the carboxylation of biotin on its carrier protein (BCCP) and then the CO(2) group is transferred by the carboxyltransferase to acetyl-CoA to form malonyl-CoA. This Prochlorococcus marinus (strain NATL2A) protein is Acetyl-coenzyme A carboxylase carboxyl transferase subunit alpha.